A 161-amino-acid polypeptide reads, in one-letter code: Ragulator complex protein LAMTOR1 (161 aa).

A disordered region spans residues 1 to 43 (MGCCYSSENEDSDQDREERKLLLDPSSPPTKALNGAEPNYHSL). G2 carries the N-myristoyl glycine lipid modification. S-palmitoyl cysteine attachment occurs at residues C3 and C4. K20 is covalently cross-linked (Glycyl lysine isopeptide (Lys-Gly) (interchain with G-Cter in ubiquitin)). Phosphoserine is present on S27. K31 participates in a covalent cross-link: Glycyl lysine isopeptide (Lys-Gly) (interchain with G-Cter in ubiquitin). A phosphoserine mark is found at S42 and S56. K60 participates in a covalent cross-link: Glycyl lysine isopeptide (Lys-Gly) (interchain with G-Cter in ubiquitin). S98 carries the post-translational modification Phosphoserine. Glycyl lysine isopeptide (Lys-Gly) (interchain with G-Cter in ubiquitin) cross-links involve residues K103 and K104. Residues 121–161 (SEPIPFSDLQQVSRIAAYAYSALSQIRVDAKEELVVQFGIP) form an interaction with LAMTOR2 and LAMTOR3 region. At S141 the chain carries Phosphoserine.

It belongs to the LAMTOR1 family. As to quaternary structure, part of the Ragulator complex composed of LAMTOR1, LAMTOR2, LAMTOR3, LAMTOR4 and LAMTOR5. LAMTOR4 and LAMTOR5 form a heterodimer that interacts, through LAMTOR1, with a LAMTOR2, LAMTOR3 heterodimer. Interacts with LAMTOR2 and LAMTOR3; the interaction is direct. The Ragulator complex interacts with both the mTORC1 complex and heterodimers constituted of the Rag GTPases RagA/RRAGA, RagB/RRAGB, RagC/RRAGC and RagD/RRAGD; regulated by amino acid availability. The Ragulator complex interacts with SLC38A9; the probable amino acid sensor. Component of the lysosomal folliculin complex (LFC), composed of FLCN, FNIP1 (or FNIP2), RagA/RRAGA or RagB/RRAGB GDP-bound, RagC/RRAGC or RagD/RRAGD GTP-bound, and Ragulator. Associates with the lysosomal V-ATPase complex; interaction promotes the guanine nucleotide exchange factor (GEF) of the Ragulator complex. Interacts with MMP14. Interacts with CDKN1B; prevents the interaction of CDKN1B with RHOA leaving RHOA in a form accessible to activation by ARHGEF2. Interacts with PIP4P1. Post-translationally, N-terminal myristoylation and palmitoylation mediates its recruitment to lysosome membranes, thereby promoting localization of the Ragulator complex to lysosomes. N-myristoylation by NMT1 is required for palmitoylation at Cys-3 and Cys-4. May be palmitoylated by ZDHHC3. In terms of processing, ubiquitinated at Lys-60, Lys-103 and Lys-104 by UBE3A, promoting its degradation by the proteasome. Ubiquitination at Lys-20 impairs the association with the lysosomal V-ATPase complex. Deubiquitination at Lys-20 by USP32 promotes the association with the lysosomal V-ATPase complex and subsequent activation of the mTORC1 complex.

It localises to the lysosome membrane. The protein resides in the late endosome membrane. Key component of the Ragulator complex, a multiprotein complex involved in amino acid sensing and activation of mTORC1, a signaling complex promoting cell growth in response to growth factors, energy levels, and amino acids. Activated by amino acids through a mechanism involving the lysosomal V-ATPase, the Ragulator plays a dual role for the small GTPases Rag (RagA/RRAGA, RagB/RRAGB, RagC/RRAGC and/or RagD/RRAGD): it (1) acts as a guanine nucleotide exchange factor (GEF), activating the small GTPases Rag and (2) mediates recruitment of Rag GTPases to the lysosome membrane. Activated Ragulator and Rag GTPases function as a scaffold recruiting mTORC1 to lysosomes where it is in turn activated. LAMTOR1 is directly responsible for anchoring the Ragulator complex to the lysosomal membrane. LAMTOR1 wraps around the other subunits of the Ragulator complex to hold them in place and interacts with the Rag GTPases, thereby playing a key role in the recruitment of the mTORC1 complex to lysosomes. Also involved in the control of embryonic stem cells differentiation via non-canonical RagC/RRAGC and RagD/RRAGD activation: together with FLCN, it is necessary to recruit and activate RagC/RRAGC and RagD/RRAGD at the lysosomes, and to induce exit of embryonic stem cells from pluripotency via non-canonical, mTOR-independent TFE3 inactivation. Also required for late endosomes/lysosomes biogenesis it may regulate both the recycling of receptors through endosomes and the MAPK signaling pathway through recruitment of some of its components to late endosomes. May be involved in cholesterol homeostasis regulating LDL uptake and cholesterol release from late endosomes/lysosomes. May also play a role in RHOA activation. In Homo sapiens (Human), this protein is Ragulator complex protein LAMTOR1.